A 602-amino-acid chain; its full sequence is Proteasome-associated ATPase (602 aa).

A compositionally biased stretch (low complexity) spans 1–17 (MSGPRSGSGSDGSTGRP). The disordered stretch occupies residues 1-31 (MSGPRSGSGSDGSTGRPGDAESRRSAYEKET). Positions 18 to 31 (GDAESRRSAYEKET) are enriched in basic and acidic residues. The stretch at 19-106 (DAESRRSAYE…LKEEVDRLAQ (88 aa)) forms a coiled coil. An ATP-binding site is contributed by 289–294 (GCGKTL). A docks into pockets in the proteasome alpha-ring region spans residues 601 to 602 (YL).

The protein belongs to the AAA ATPase family. In terms of assembly, homohexamer. Assembles into a hexameric ring structure that caps the 20S proteasome core. Strongly interacts with the prokaryotic ubiquitin-like protein Pup through a hydrophobic interface; the interacting region of ARC lies in its N-terminal coiled-coil domain. There is one Pup binding site per ARC hexamer ring. Upon ATP-binding, the C-terminus of ARC interacts with the alpha-rings of the proteasome core, possibly by binding to the intersubunit pockets.

Its pathway is protein degradation; proteasomal Pup-dependent pathway. Its function is as follows. ATPase which is responsible for recognizing, binding, unfolding and translocation of pupylated proteins into the bacterial 20S proteasome core particle. May be essential for opening the gate of the 20S proteasome via an interaction with its C-terminus, thereby allowing substrate entry and access to the site of proteolysis. Thus, the C-termini of the proteasomal ATPase may function like a 'key in a lock' to induce gate opening and therefore regulate proteolysis. In Frankia casuarinae (strain DSM 45818 / CECT 9043 / HFP020203 / CcI3), this protein is Proteasome-associated ATPase.